We begin with the raw amino-acid sequence, 294 residues long: Endolytic peptidoglycan transglycosylase RlpA (294 aa).

A signal peptide spans 1 to 23 (MKQKIFQILTALCCIFYVMSAQA). The SPOR domain occupies 216-291 (EKYTTVYKIR…NYSKPLIVYT (76 aa)).

The protein belongs to the RlpA family.

Functionally, lytic transglycosylase with a strong preference for naked glycan strands that lack stem peptides. In Pasteurella multocida (strain Pm70), this protein is Endolytic peptidoglycan transglycosylase RlpA.